A 379-amino-acid chain; its full sequence is Cytochrome b (379 aa).

4 helical membrane passes run 34-54 (LGSL…FLTM), 78-99 (WLIR…YLHV), 114-134 (WMTG…GYVL), and 179-199 (FYTF…IHLF). Positions 84 and 98 each coordinate heme b. Heme b is bound by residues histidine 183 and histidine 197. Histidine 202 contacts a ubiquinone. Transmembrane regions (helical) follow at residues 227–247 (YKDM…CLID), 289–309 (LGGV…PFYN), 321–341 (MNQI…WIGK), and 348–368 (YIMT…FNVH).

It belongs to the cytochrome b family. As to quaternary structure, the main subunits of complex b-c1 are: cytochrome b, cytochrome c1 and the Rieske protein. Heme b is required as a cofactor.

It is found in the mitochondrion inner membrane. Functionally, component of the ubiquinol-cytochrome c reductase complex (complex III or cytochrome b-c1 complex) that is part of the mitochondrial respiratory chain. The b-c1 complex mediates electron transfer from ubiquinol to cytochrome c. Contributes to the generation of a proton gradient across the mitochondrial membrane that is then used for ATP synthesis. The sequence is that of Cytochrome b (MT-CYB) from Locusta migratoria (Migratory locust).